Consider the following 487-residue polypeptide: Inosine-5'-monophosphate dehydrogenase (487 aa).

CBS domains follow at residues 93 to 152 and 153 to 214; these read VVTE…VTAV and MTPK…CKDE. Residues D248, 248–250, and 298–300 contribute to the NAD(+) site; these read DSS and GIG. K(+)-binding residues include G300 and G302. S303 contacts IMP. Position 305 (C305) interacts with K(+). The active-site Thioimidate intermediate is C305. Residues 338–340, 361–362, and 385–389 contribute to the IMP site; these read DGG, GS, and YRGMG. The active-site Proton acceptor is R401. E415 is an IMP binding site. Residues E469, S470, and H471 each coordinate K(+).

Belongs to the IMPDH/GMPR family. In terms of assembly, homotetramer. It depends on K(+) as a cofactor.

It carries out the reaction IMP + NAD(+) + H2O = XMP + NADH + H(+). Its pathway is purine metabolism; XMP biosynthesis via de novo pathway; XMP from IMP: step 1/1. Mycophenolic acid (MPA) is a non-competitive inhibitor that prevents formation of the closed enzyme conformation by binding to the same site as the amobile flap. In contrast, mizoribine monophosphate (MZP) is a competitive inhibitor that induces the closed conformation. MPA is a potent inhibitor of mammalian IMPDHs but a poor inhibitor of the bacterial enzymes. MZP is a more potent inhibitor of bacterial IMPDH. Catalyzes the conversion of inosine 5'-phosphate (IMP) to xanthosine 5'-phosphate (XMP), the first committed and rate-limiting step in the de novo synthesis of guanine nucleotides, and therefore plays an important role in the regulation of cell growth. This Yersinia pestis protein is Inosine-5'-monophosphate dehydrogenase.